Here is a 562-residue protein sequence, read N- to C-terminus: Transcriptional adapter 2A (562 aa).

The segment at 91–146 (KDANRCATCRCSLTEPYIKCSECLDTLLCLQCFSRGKEAFSHRNNHAYIIVRDNIQ) adopts a ZZ-type zinc-finger fold. Zn(2+) is bound by residues cysteine 96, cysteine 99, cysteine 110, cysteine 113, cysteine 119, cysteine 122, histidine 132, and histidine 136. The region spanning 154–198 (WTARDERILLKTLRTHGYGNWEAVSQALDQRHEPAEVRRHYHDCY) is the SANT domain. One can recognise an SWIRM domain in the interval 471-562 (CLTPTEYNFS…GHISRPPSYG (92 aa)).

As to quaternary structure, component of the Ada2a-containing (ATAC) complex composed of at least Ada2a, Atac1, Hcf, Ada3, Gcn5, Mocs2B, Charac-14, Atac3, Atac2, NC2beta and wds. Component of a complex that does not include Gcn5 or Ada3.

It is found in the nucleus. It localises to the chromosome. Its function is as follows. Component of the histone acetyltransferase (HAT) complex ATAC; predominantly involved in acetylation of histone H4, including at Lys-6 (H4K5ac) and Lys-13 (H4K12ac). May be part of several different complexes, including Gcn5-independent complexes involved in RNA polymerase II-dependent transcription. The polypeptide is Transcriptional adapter 2A (Drosophila melanogaster (Fruit fly)).